The sequence spans 126 residues: uncharacterized protein (126 aa).

Positions 19-126 (IFERIIEGAV…LGGGLLGSIA (108 aa)) constitute an HIT domain. The Histidine triad motif motif lies at 111 to 115 (HLHIH).

This is an uncharacterized protein from Chlamydia muridarum (strain MoPn / Nigg).